Here is a 295-residue protein sequence, read N- to C-terminus: Putative aquaporin-12A (295 aa).

The chain crosses the membrane as a helical span at residues 1-21; the sequence is MAGLNVSLSFFFATFALCEAA. Over 22–54 the chain is Extracellular; sequence RRASKALLPVGAYEVFAREAMRTLVELGPWAGD. Residues 55 to 75 traverse the membrane as a helical segment; sequence FGPDLLLTLLFLLFLAHGVTL. The Cytoplasmic portion of the chain corresponds to 76–99; it reads DGASANPTVSLQEFLMAEQSLPGT. Positions 77-114 form an intramembrane region, discontinuously helical; the sequence is GASANPTVSLQEFLMAEQSLPGTLLKLAAQGLGMQAAC. Positions 81–83 match the NPA 1 motif; the sequence is NPT. Residues 100 to 126 traverse the membrane as a helical segment; sequence LLKLAAQGLGMQAACTLMRLCWAWELS. Topologically, residues 127–145 are extracellular; that stretch reads DLHLLQSLMAQSCSSALRT. A helical transmembrane segment spans residues 146–166; it reads SVPHGALVEAACAFCFHLTLL. At 167 to 178 the chain is on the cytoplasmic side; that stretch reads HLRHSPPAYSGP. The chain crosses the membrane as a helical span at residues 179-199; it reads AVALLVTVTAYTAGPFTSAFF. Residues 195–206 constitute an intramembrane region (discontinuously helical); it reads TSAFFNPALAAS. The NPA 2 signature appears at 200–202; sequence NPA. The Extracellular portion of the chain corresponds to 200-215; sequence NPALAASVTFACSGHT. The chain crosses the membrane as a helical span at residues 216 to 236; it reads LLEYVQVYWLGPLTGMVLAVL. Over 237–295 the chain is Cytoplasmic; that stretch reads LHQGRLPHLFQRNLFYGQKNKYRAPRGKPAPASGDTQTPAKGSSVREPGRSGVEGPHSS. Residues 257–295 are disordered; the sequence is KYRAPRGKPAPASGDTQTPAKGSSVREPGRSGVEGPHSS.

It belongs to the MIP/aquaporin (TC 1.A.8) family. AQP11/AQP12 subfamily. Homotetramer; each monomer provides an independent water pore. As to expression, restricted to the pancreas.

It localises to the membrane. It carries out the reaction H2O(in) = H2O(out). Putative aquaporin. Could form homotetrameric transmembrane channels, with each monomer independently mediating water transport across the plasma membrane along its osmotic gradient. The polypeptide is Putative aquaporin-12A (Homo sapiens (Human)).